The following is a 267-amino-acid chain: Hydroxyethylthiazole kinase 2 (267 aa).

Substrate is bound at residue Met41. ATP-binding residues include Lys116 and Thr166. Residue Gly193 coordinates substrate.

This sequence belongs to the Thz kinase family. Mg(2+) serves as cofactor.

The catalysed reaction is 5-(2-hydroxyethyl)-4-methylthiazole + ATP = 4-methyl-5-(2-phosphooxyethyl)-thiazole + ADP + H(+). Its pathway is cofactor biosynthesis; thiamine diphosphate biosynthesis; 4-methyl-5-(2-phosphoethyl)-thiazole from 5-(2-hydroxyethyl)-4-methylthiazole: step 1/1. In terms of biological role, catalyzes the phosphorylation of the hydroxyl group of 4-methyl-5-beta-hydroxyethylthiazole (THZ). The protein is Hydroxyethylthiazole kinase 2 of Streptococcus pneumoniae serotype 4 (strain ATCC BAA-334 / TIGR4).